We begin with the raw amino-acid sequence, 162 residues long: uncharacterized protein (162 aa).

A signal peptide spans 1–21 (MEGIMKKFFALMTLIAGISFS). A coiled-coil region spans residues 32 to 118 (VIRESKFIAK…KKAELEKMVF (87 aa)).

This sequence belongs to the Skp family.

This is an uncharacterized protein from Aquifex aeolicus (strain VF5).